Consider the following 469-residue polypeptide: Spliceosome-associated protein CWC27 homolog (469 aa).

The residue at position 2 (S2) is an N-acetylserine. Residues 11-166 form the PPIase cyclophilin-type domain; it reads TNGKVLLKTT…NPHRIKSCEV (156 aa). The segment covering 175 to 193 has biased composition (basic and acidic residues); the sequence is TPREIKKPKNEKPEEEVKK. 2 disordered regions span residues 175 to 415 and 428 to 469; these read TPRE…DDEG and RKVK…KERR. Residues 206-229 adopt a coiled-coil conformation; it reads SFGEEAEEEEEEVNRVSQSMKGRS. A compositionally biased stretch (basic and acidic residues) spans 231–241; sequence SSHDLLKDDPH. Residues 256 to 278 show a composition bias toward acidic residues; it reads TGDLEDDGEDDSAERDEYMEDDE. 2 stretches are compositionally biased toward basic and acidic residues: residues 302-341 and 356-368; these read GDGE…KVEE and EYRR…EALR. Residues 309 to 371 adopt a coiled-coil conformation; that stretch reads ASRSEELRKE…QKYEALRKQQ (63 aa). Residues 384–403 are compositionally biased toward polar residues; the sequence is ALLSQFKSKLTQAITETPEN. A compositionally biased stretch (basic and acidic residues) spans 454 to 469; sequence RREESKKLLREKKERR.

The protein belongs to the cyclophilin-type PPIase family. As to quaternary structure, part of the activated spliceosome B/catalytic step 1 spliceosome, one of the forms of the spliceosome which has a well-formed active site but still cannot catalyze the branching reaction and is composed at least of 52 proteins, the U2, U5 and U6 snRNAs and the pre-mRNA. Recruited during early steps of activated spliceosome B maturation, it is probably one of the first proteins released from this complex as he matures to the spliceosome C complex. Component of the minor spliceosome, which splices U12-type introns.

It localises to the nucleus. Its function is as follows. As part of the spliceosome, plays a role in pre-mRNA splicing. Probable inactive PPIase with no peptidyl-prolyl cis-trans isomerase activity. As a component of the minor spliceosome, involved in the splicing of U12-type introns in pre-mRNAs. The polypeptide is Spliceosome-associated protein CWC27 homolog (Mus musculus (Mouse)).